The primary structure comprises 313 residues: Syndecan-1 (313 aa).

An N-terminal signal peptide occupies residues 1-22 (MRRAALWLWLCALALRLQPALP). Over 23-257 (QIVTANVPPE…GLLDRKEVLG (235 aa)) the chain is Extracellular. Disordered stretches follow at residues 27 to 58 (ANVPPEDQDGSGDDSDNFSGSGTGALPDMTLS) and 95 to 186 (AGEK…VEDG). Positions 32–42 (EDQDGSGDDSD) are enriched in acidic residues. An O-linked (Xyl...) (chondroitin sulfate) serine glycan is attached at Ser37. Asn43 carries an N-linked (GlcNAc...) asparagine glycan. 2 O-linked (Xyl...) (heparan sulfate) serine glycosylation sites follow: Ser45 and Ser47. Basic and acidic residues predominate over residues 97 to 129 (EKPEEGEPVAHVEAEPDFTARDKEKEATTRPRE). The span at 135–154 (VTQQASTAARATTAQASVTS) shows a compositional bias: low complexity. Residues Ser209 and Ser219 are each glycosylated (O-linked (Xyl...) (chondroitin sulfate) serine). Residues 258–278 (GVIAGGLVGLIFAVCLVAFML) form a helical membrane-spanning segment. Topologically, residues 279-313 (YRMKKKDEGSYSLEEPKQANGGAYQKPTKQEEFYA) are cytoplasmic. A compositionally biased stretch (basic and acidic residues) spans 286–295 (EGSYSLEEPK). Residues 286 to 313 (EGSYSLEEPKQANGGAYQKPTKQEEFYA) form a disordered region. Ser288 carries the phosphoserine modification.

It belongs to the syndecan proteoglycan family. As to quaternary structure, interacts with CDCP1. Interacts (via C-terminus) with TIAM1 (via PDZ domain). Interacts with MDK. Shedding is enhanced by a number of factors such as heparanase, thrombin or EGF. Also by stress and wound healing. PMA-mediated shedding is inhibited by TIMP3.

The protein localises to the membrane. The protein resides in the secreted. It is found in the extracellular exosome. In terms of biological role, cell surface proteoglycan that contains both heparan sulfate and chondroitin sulfate and that links the cytoskeleton to the interstitial matrix. Regulates exosome biogenesis in concert with SDCBP and PDCD6IP. Able to induce its own expression in dental mesenchymal cells and also in the neighboring dental epithelial cells via an MSX1-mediated pathway. This chain is Syndecan-1, found in Rattus norvegicus (Rat).